The sequence spans 386 residues: Inactive GDSL esterase/lipase-like protein 23 (386 aa).

The signal sequence occupies residues 1-29 (MMAKNCNLVSVLCVFLVLTLFNKPITVAG). Ser-43 (nucleophile) is an active-site residue. Asn-105, Asn-165, and Asn-288 each carry an N-linked (GlcNAc...) asparagine glycan. Catalysis depends on residues Asp-322 and His-325.

The protein belongs to the 'GDSL' lipolytic enzyme family. In terms of assembly, part of the PYK10 complex. Interacts with MVP1. Expressed mainly in roots.

The protein localises to the endoplasmic reticulum. Functionally, involved in the control of the PYK10 complex size and possibly substrate specificity. May be exported from the endoplasmic reticulum upon interaction with MVP1. This is Inactive GDSL esterase/lipase-like protein 23 (GLL23) from Arabidopsis thaliana (Mouse-ear cress).